Reading from the N-terminus, the 475-residue chain is Ribulose bisphosphate carboxylase large chain (475 aa).

Residues 1-2 (MS) constitute a propeptide that is removed on maturation. Proline 3 is subject to N-acetylproline. Lysine 14 carries the post-translational modification N6,N6,N6-trimethyllysine. Substrate is bound by residues asparagine 123 and threonine 173. Lysine 175 serves as the catalytic Proton acceptor. Position 177 (lysine 177) interacts with substrate. Positions 201, 203, and 204 each coordinate Mg(2+). An N6-carboxylysine modification is found at lysine 201. Histidine 294 (proton acceptor) is an active-site residue. Substrate contacts are provided by arginine 295, histidine 327, and serine 379.

This sequence belongs to the RuBisCO large chain family. Type I subfamily. As to quaternary structure, heterohexadecamer of 8 large chains and 8 small chains; disulfide-linked. The disulfide link is formed within the large subunit homodimers. It depends on Mg(2+) as a cofactor. The disulfide bond which can form in the large chain dimeric partners within the hexadecamer appears to be associated with oxidative stress and protein turnover.

It is found in the plastid. It localises to the chloroplast. The enzyme catalyses 2 (2R)-3-phosphoglycerate + 2 H(+) = D-ribulose 1,5-bisphosphate + CO2 + H2O. It catalyses the reaction D-ribulose 1,5-bisphosphate + O2 = 2-phosphoglycolate + (2R)-3-phosphoglycerate + 2 H(+). RuBisCO catalyzes two reactions: the carboxylation of D-ribulose 1,5-bisphosphate, the primary event in carbon dioxide fixation, as well as the oxidative fragmentation of the pentose substrate in the photorespiration process. Both reactions occur simultaneously and in competition at the same active site. The sequence is that of Ribulose bisphosphate carboxylase large chain from Ostrya virginiana (American hophornbeam).